The chain runs to 237 residues: MEVIPAVDIKDGSCVRLKKGDFNKRRVYSTSPVDVALYWEKHGASRLHIVDLDGAKSGWPTHLKTIREIALRVNIPLQVGGGIRSLKVIKKYLDSGVDRIILGTVALKNPELVKRALDNFGSNRIVVGVDARGGKVATEGWLKTSQVTVEDIISEMEEVGVKTFIYTDINRDGMLKGPDIEGIKRVLKSTKARIIASGGISSRQDLINLKAIGIKAAIVGKALYEGNLPLEVLNQYP.

The active-site Proton acceptor is Asp-8. The active-site Proton donor is Asp-130.

Belongs to the HisA/HisF family.

The protein localises to the cytoplasm. The catalysed reaction is 1-(5-phospho-beta-D-ribosyl)-5-[(5-phospho-beta-D-ribosylamino)methylideneamino]imidazole-4-carboxamide = 5-[(5-phospho-1-deoxy-D-ribulos-1-ylimino)methylamino]-1-(5-phospho-beta-D-ribosyl)imidazole-4-carboxamide. The protein operates within amino-acid biosynthesis; L-histidine biosynthesis; L-histidine from 5-phospho-alpha-D-ribose 1-diphosphate: step 4/9. This Halothermothrix orenii (strain H 168 / OCM 544 / DSM 9562) protein is 1-(5-phosphoribosyl)-5-[(5-phosphoribosylamino)methylideneamino] imidazole-4-carboxamide isomerase.